Reading from the N-terminus, the 412-residue chain is Gamma-glutamyl phosphate reductase (412 aa).

Belongs to the gamma-glutamyl phosphate reductase family.

The protein resides in the cytoplasm. It catalyses the reaction L-glutamate 5-semialdehyde + phosphate + NADP(+) = L-glutamyl 5-phosphate + NADPH + H(+). The protein operates within amino-acid biosynthesis; L-proline biosynthesis; L-glutamate 5-semialdehyde from L-glutamate: step 2/2. In terms of biological role, catalyzes the NADPH-dependent reduction of L-glutamate 5-phosphate into L-glutamate 5-semialdehyde and phosphate. The product spontaneously undergoes cyclization to form 1-pyrroline-5-carboxylate. This chain is Gamma-glutamyl phosphate reductase, found in Streptococcus suis (strain 98HAH33).